We begin with the raw amino-acid sequence, 268 residues long: Hydroxyacylglutathione hydrolase (268 aa).

Zn(2+) is bound by residues H56, H58, D60, H61, H112, D137, and H176. 176-178 contacts substrate; that stretch reads HEY.

This sequence belongs to the metallo-beta-lactamase superfamily. Glyoxalase II family. In terms of assembly, monomer. It depends on Zn(2+) as a cofactor.

The catalysed reaction is an S-(2-hydroxyacyl)glutathione + H2O = a 2-hydroxy carboxylate + glutathione + H(+). The protein operates within secondary metabolite metabolism; methylglyoxal degradation; (R)-lactate from methylglyoxal: step 2/2. Thiolesterase that catalyzes the hydrolysis of S-D-lactoyl-glutathione to form glutathione and D-lactic acid. The protein is Hydroxyacylglutathione hydrolase (hagh) of Dictyostelium discoideum (Social amoeba).